The sequence spans 520 residues: Flavin-dependent halogenase radH (520 aa).

Positions 14, 17, and 47 each coordinate FAD. Chloride-binding residues include S330 and G331.

The protein belongs to the flavin-dependent halogenase family.

It functions in the pathway secondary metabolite biosynthesis. In terms of biological role, non-heme halogenase; part of the gene cluster that mediates the biosynthesis of radicicol, a resorcylic acid lactone (RAL) that irreversibly inhibits the HSP90 molecular chaperone, an important target for cancer chemotherapy. The cluster encodes only two apparent post-PKS enzymes, a cytochrome P450 monooxygenase (radP) and a non-heme halogenase (radH) that introduce the epoxide and the chlorine, respectively. If this cluster includes all the genes required for radicicol biosynthesis, the remaining structural features of radicicol are presumably generated by the PKSs rads1 and rads2. The C-2' ketone could arise if the R-PKS rads1 and NR-PKS rads2 each carry out four iterations, in contrast to the five iteration-three iteration split for the hypothemycin PKSs. The origin of the cis 5',6' double bond is not known. The radicicol R-PKS rads1 ER domain may catalyze either double bond isomerization or reduction in the third iteration. The chain is Flavin-dependent halogenase radH from Floropilus chiversii (Chaetomium chiversii).